A 181-amino-acid polypeptide reads, in one-letter code: Large ribosomal subunit protein uL5 (181 aa).

The protein belongs to the universal ribosomal protein uL5 family. Part of the 50S ribosomal subunit; contacts the 5S rRNA and probably tRNA. Forms a bridge to the 30S subunit in the 70S ribosome.

This is one of the proteins that bind and probably mediate the attachment of the 5S RNA into the large ribosomal subunit, where it forms part of the central protuberance. In the 70S ribosome it contacts protein S13 of the 30S subunit (bridge B1b), connecting the 2 subunits; this bridge is implicated in subunit movement. May contact the P site tRNA; the 5S rRNA and some of its associated proteins might help stabilize positioning of ribosome-bound tRNAs. The chain is Large ribosomal subunit protein uL5 from Methanococcus maripaludis (strain DSM 14266 / JCM 13030 / NBRC 101832 / S2 / LL).